We begin with the raw amino-acid sequence, 530 residues long: Phosphoenolpyruvate carboxykinase (ATP) (530 aa).

Residues Arg60, Tyr195, and Lys201 each coordinate substrate. Residues Lys201, His221, and 237 to 245 each bind ATP; that span reads GLSGTGKTT. 2 residues coordinate Mn(2+): Lys201 and His221. Asp258 contacts Mn(2+). ATP-binding positions include Glu286, Arg324, 443-444, and Ser449; that span reads RI. Arg324 serves as a coordination point for substrate.

This sequence belongs to the phosphoenolpyruvate carboxykinase (ATP) family. Requires Mn(2+) as cofactor.

The protein resides in the cytoplasm. It carries out the reaction oxaloacetate + ATP = phosphoenolpyruvate + ADP + CO2. It participates in carbohydrate biosynthesis; gluconeogenesis. Involved in the gluconeogenesis. Catalyzes the conversion of oxaloacetate (OAA) to phosphoenolpyruvate (PEP) through direct phosphoryl transfer between the nucleoside triphosphate and OAA. The chain is Phosphoenolpyruvate carboxykinase (ATP) from Pelobacter propionicus (strain DSM 2379 / NBRC 103807 / OttBd1).